Reading from the N-terminus, the 512-residue chain is Maturase K (512 aa).

Belongs to the intron maturase 2 family. MatK subfamily.

The protein resides in the plastid. Its subcellular location is the chloroplast. In terms of biological role, usually encoded in the trnK tRNA gene intron. Probably assists in splicing its own and other chloroplast group II introns. The sequence is that of Maturase K from Wolffiella gladiata (Florida mud-midget).